Reading from the N-terminus, the 96-residue chain is SAGA complex subunit SUS1 (96 aa).

K68 is covalently cross-linked (Glycyl lysine isopeptide (Lys-Gly) (interchain with G-Cter in ubiquitin)).

It belongs to the ENY2 family. As to quaternary structure, component of the 1.8 MDa SAGA (Spt-Ada-Gcn5 acetyltransferase) complex, which is composed of 19 subunits TRA1, SPT7, TAF5, NGG1/ADA3, SGF73, SPT20/ADA5, SPT8, TAF12, TAF6, HFI1/ADA1, UBP8, GCN5, ADA2, SPT3, SGF29, TAF10, TAF9, SGF11 and SUS1. The SAGA complex is composed of 4 modules, namely the HAT (histone acetyltransferase) module (GCN5, ADA2, NGG1/ADA3 and SGF29), the DUB (deubiquitinating) module (UBP8, SGF11, SGF73 and SUS1), the core or TAF (TBP-associated factor) module (TAF5, TAF6, TAF9, TAF10 and TAF12), and the Tra1 or SPT (Suppressor of Ty) module (TRA1, HFI1/ADA1, SPT3, SPT7, SPT8 and SPT20/ADA5). The Tra1/SPT module binds activators, the core module recruits TBP (TATA-binding protein), the HAT module contains the histone H3 acetyltransferase GCN5, and the DUB module comprises the histone H2B deubiquitinase UBP8. Also identified in an altered form of SAGA, named SALSA (SAGA altered, Spt8 absent) or SLIK (SAGA-like) complex, which contains a C-terminal truncated form of SPT7 and is missing SPT8. However, it has been shown that the SAGA and SAGA-like SALSA/SLIK transcriptional coactivators are structurally and biochemically equivalent. Component of the nuclear pore complex (NPC)-associated TREX-2 complex (transcription and export complex 2), composed of at least SUS1, SAC3, THP1, SEM1, and CDC31. TREX-2 contains 2 SUS1 chains. The TREX-2 complex interacts with the mRNA export factors MEX67, MTR2 and SUB2, and the nucleoporin NUP1. Interacts directly with THP1, SAC3. Interacts directly with SGF11 and UBP8. Interacts with YRA1, MEX67 and with the RNA polymerase II.

The protein localises to the nucleus. It is found in the nucleoplasm. The protein resides in the cytoplasm. Its subcellular location is the P-body. Its function is as follows. Involved in mRNA export coupled transcription activation by association with both the TREX-2 and the SAGA complexes. SAGA acts as a general cofactor required for essentially all RNA polymerase II transcription. At the promoters, SAGA is required for transcription pre-initiation complex (PIC) recruitment. It influences RNA polymerase II transcriptional activity through different activities such as TBP interaction (via core/TAF module) and promoter selectivity, interaction with transcription activators (via Tra1/SPT module), and chromatin modification through histone acetylation (via HAT module) and deubiquitination (via DUB module). SAGA preferentially acetylates histones H3 (to form H3K9ac, H3K14ac, H3K18ac and H3K23ac) and H2B and deubiquitinates histone H2B. SAGA interacts with DNA via upstream activating sequences (UASs). Also identified in a modified version of SAGA named SALSA or SLIK. The cleavage of SPT7 and the absence of the SPT8 subunit in SLIK neither drive any major conformational differences in its structure compared with SAGA, nor significantly affect HAT, DUB, or DNA-binding activities. Within the SAGA complex, participates in a subcomplex with SGF11, SGF73 and UBP8 required for deubiquitination of H2B and for the maintenance of steady-state H3 methylation levels. The TREX-2 complex functions in docking export-competent ribonucleoprotein particles (mRNPs) to the nuclear entrance of the nuclear pore complex (nuclear basket), by association with components of the nuclear mRNA export machinery (MEX67-MTR2 and SUB2) in the nucleoplasm and the nucleoporin NUP1 at the nuclear basket. TREX-2 participates in mRNA export and accurate chromatin positioning in the nucleus by tethering genes to the nuclear periphery. SUS1 also has a role in mRNP biogenesis and maintenance of genome integrity through preventing RNA-mediated genome instability. Has a role in response to DNA damage induced by methyl methane sulfonate (MMS) and replication arrest induced by hydroxyurea. May also be involved in cytoplasmic mRNA decay by interaction with components of P-bodies. This chain is SAGA complex subunit SUS1, found in Saccharomyces cerevisiae (strain ATCC 204508 / S288c) (Baker's yeast).